Here is an 870-residue protein sequence, read N- to C-terminus: Protein RRP6-like 2 (870 aa).

Positions 263–428 (VQEVKDLKEL…YIYDLIKLEL (166 aa)) constitute a 3'-5' exonuclease domain. The 81-residue stretch at 479-559 (NAAQLAIVAG…RQSMQHYAAF (81 aa)) folds into the HRDC domain. Disordered regions lie at residues 583 to 605 (SEKK…SSQL), 649 to 668 (GALL…EKVK), 688 to 775 (TEKV…EDEP), and 821 to 870 (FGEG…SFKN). Composition is skewed to basic and acidic residues over residues 720–729 (SKEDGVKELK) and 821–834 (FGEG…KREA). Over residues 840 to 849 (KGSTQEQSEF) the composition is skewed to polar residues.

It localises to the nucleus. It is found in the nucleolus. The protein localises to the cytoplasm. Functionally, acts as an important epigenetic regulator through multiple silencing mechanisms. Involved in association with RRP6L1 in the silencing of the solo LTR locus. Controls levels of non-coding RNAs (ncRNAs) from the solo LTR locus. Seems to function independently of the RNA-mediated gene silencing (RdDM) pathway. Functions redundantly with RRP6L1 in the regulation of FLC locus. Participates in the maintenance of trimethylated 'Lys-27' (H3K27me3) at FLC locus via the regulation of antisense long non-coding RNAs (lncRNAs) and the regulation of diverse antisense RNAs derived from the FLC locus. Seems not involved in the exosomal RNA degradation. May be involved in poly(A)-mediated RNA degradation. The polypeptide is Protein RRP6-like 2 (Arabidopsis thaliana (Mouse-ear cress)).